Reading from the N-terminus, the 548-residue chain is Chaperonin GroEL (548 aa).

ATP is bound by residues 30 to 33, lysine 51, 87 to 91, glycine 415, 479 to 481, and aspartate 495; these read TLGP, DGTTT, and NAA. The interval 525–548 is disordered; the sequence is PKEDKTSDASSSPAGGMGGMGGMM. A compositionally biased stretch (gly residues) spans 539 to 548; the sequence is GGMGGMGGMM.

The protein belongs to the chaperonin (HSP60) family. As to quaternary structure, forms a cylinder of 14 subunits composed of two heptameric rings stacked back-to-back. Interacts with the co-chaperonin GroES.

The protein localises to the cytoplasm. The enzyme catalyses ATP + H2O + a folded polypeptide = ADP + phosphate + an unfolded polypeptide.. Its function is as follows. Together with its co-chaperonin GroES, plays an essential role in assisting protein folding. The GroEL-GroES system forms a nano-cage that allows encapsulation of the non-native substrate proteins and provides a physical environment optimized to promote and accelerate protein folding. This Buchnera aphidicola subsp. Rhopalosiphum maidis protein is Chaperonin GroEL.